The primary structure comprises 84 residues: RNA-binding protein Hfq (84 aa).

Residues 11–71 form the Sm domain; it reads DVFLNFIRKN…ISTVMPSTPI (61 aa).

Belongs to the Hfq family. As to quaternary structure, homohexamer.

RNA chaperone that binds small regulatory RNA (sRNAs) and mRNAs to facilitate mRNA translational regulation in response to envelope stress, environmental stress and changes in metabolite concentrations. Also binds with high specificity to tRNAs. The sequence is that of RNA-binding protein Hfq from Paramagnetospirillum magneticum (strain ATCC 700264 / AMB-1) (Magnetospirillum magneticum).